Consider the following 268-residue polypeptide: 4-hydroxy-tetrahydrodipicolinate reductase (268 aa).

Residues 10-15 (GSTGRM), Glu36, 99-101 (GTT), and 123-126 (APNM) each bind NAD(+). His156 acts as the Proton donor/acceptor in catalysis. Position 157 (His157) interacts with (S)-2,3,4,5-tetrahydrodipicolinate. Lys160 acts as the Proton donor in catalysis. 166–167 (GT) lines the (S)-2,3,4,5-tetrahydrodipicolinate pocket.

This sequence belongs to the DapB family.

Its subcellular location is the cytoplasm. It carries out the reaction (S)-2,3,4,5-tetrahydrodipicolinate + NAD(+) + H2O = (2S,4S)-4-hydroxy-2,3,4,5-tetrahydrodipicolinate + NADH + H(+). It catalyses the reaction (S)-2,3,4,5-tetrahydrodipicolinate + NADP(+) + H2O = (2S,4S)-4-hydroxy-2,3,4,5-tetrahydrodipicolinate + NADPH + H(+). Its pathway is amino-acid biosynthesis; L-lysine biosynthesis via DAP pathway; (S)-tetrahydrodipicolinate from L-aspartate: step 4/4. Functionally, catalyzes the conversion of 4-hydroxy-tetrahydrodipicolinate (HTPA) to tetrahydrodipicolinate. This is 4-hydroxy-tetrahydrodipicolinate reductase from Nitrosomonas europaea (strain ATCC 19718 / CIP 103999 / KCTC 2705 / NBRC 14298).